Consider the following 178-residue polypeptide: Ribosome maturation factor RimP (178 aa).

This sequence belongs to the RimP family.

It localises to the cytoplasm. Its function is as follows. Required for maturation of 30S ribosomal subunits. The polypeptide is Ribosome maturation factor RimP (Cutibacterium acnes (strain DSM 16379 / KPA171202) (Propionibacterium acnes)).